We begin with the raw amino-acid sequence, 310 residues long: p-hydroxybenzoic acid efflux pump subunit AaeA (310 aa).

A helical transmembrane segment spans residues 12–32 (AITVVLVILAFIAIFNAWVYY).

This sequence belongs to the membrane fusion protein (MFP) (TC 8.A.1) family.

It localises to the cell inner membrane. Forms an efflux pump with AaeB. This chain is p-hydroxybenzoic acid efflux pump subunit AaeA, found in Escherichia coli O8 (strain IAI1).